Reading from the N-terminus, the 72-residue chain is Translation initiation factor IF-1 (72 aa).

The S1-like domain maps to 1-72; that stretch reads MAKDDVIEVE…TRGRITYRYK (72 aa). Y60 carries the phosphotyrosine modification.

This sequence belongs to the IF-1 family. Component of the 30S ribosomal translation pre-initiation complex which assembles on the 30S ribosome in the order IF-2 and IF-3, IF-1 and N-formylmethionyl-tRNA(fMet); mRNA recruitment can occur at any time during PIC assembly.

It localises to the cytoplasm. Its function is as follows. One of the essential components for the initiation of protein synthesis. Stabilizes the binding of IF-2 and IF-3 on the 30S subunit to which N-formylmethionyl-tRNA(fMet) subsequently binds. Helps modulate mRNA selection, yielding the 30S pre-initiation complex (PIC). Upon addition of the 50S ribosomal subunit IF-1, IF-2 and IF-3 are released leaving the mature 70S translation initiation complex. The polypeptide is Translation initiation factor IF-1 (Geobacillus thermodenitrificans (strain NG80-2)).